Reading from the N-terminus, the 290-residue chain is ATP synthase gamma chain (290 aa).

This sequence belongs to the ATPase gamma chain family. In terms of assembly, F-type ATPases have 2 components, CF(1) - the catalytic core - and CF(0) - the membrane proton channel. CF(1) has five subunits: alpha(3), beta(3), gamma(1), delta(1), epsilon(1). CF(0) has three main subunits: a, b and c.

It is found in the cell membrane. In terms of biological role, produces ATP from ADP in the presence of a proton gradient across the membrane. The gamma chain is believed to be important in regulating ATPase activity and the flow of protons through the CF(0) complex. This is ATP synthase gamma chain from Roseiflexus castenholzii (strain DSM 13941 / HLO8).